The primary structure comprises 285 residues: Zinc transporter ZupT (285 aa).

Transmembrane regions (helical) follow at residues 13-33 (AFLL…IAFF), 41-61 (FLCV…MIEM), and 80-100 (WITV…DKFV). Fe(2+) contacts are provided by asparagine 153 and glutamate 156. Glutamate 156 provides a ligand contact to Zn(2+). A helical membrane pass occupies residues 160 to 180 (TFVSALEGASLAIPITIAIAI). Histidine 181 contacts Zn(2+). Fe(2+) is bound by residues asparagine 182, glutamate 185, and glutamate 214. A Zn(2+)-binding site is contributed by glutamate 185. The next 3 helical transmembrane spans lie at 204–224 (FLYS…GYTL), 228–248 (IFND…MVFI), and 265–285 (LAIY…LLFI).

This sequence belongs to the ZIP transporter (TC 2.A.5) family. ZupT subfamily.

It is found in the cell membrane. The catalysed reaction is Zn(2+)(in) = Zn(2+)(out). Mediates zinc uptake. May also transport other divalent cations. This chain is Zinc transporter ZupT, found in Clostridium perfringens (strain 13 / Type A).